Reading from the N-terminus, the 415-residue chain is E3 ubiquitin-protein ligase RNF135 (415 aa).

An RING-type zinc finger spans residues 21–67; that stretch reads CIICQGLLDWPTTLPCGHSFCLQCLKDLWVSKRAGVDSCPWACPICR. A coiled-coil region spans residues 181-206; the sequence is TFSASQKKIQEILRDLEKIQETLQGS. Positions 228-415 constitute a B30.2/SPRY domain; sequence PDQRYPVSRK…LTPGNYLEIL (188 aa).

Homodimer. Interacts (homodimer) with RIGI (double-stranded RNA-bound oligomeric form); involved in both RIGI ubiquitination, oligomerization into filaments associated with viral RNAs and the bridging of these filaments. Interacts with UBE2D3 and UBE2N; E2 ubiquitin ligases involved in RNF135-mediated ubiquitination of RIGI and activation of the RIG-I signaling pathway. Interacts with PCBP2.

The protein localises to the cytoplasm. Its subcellular location is the stress granule. The enzyme catalyses S-ubiquitinyl-[E2 ubiquitin-conjugating enzyme]-L-cysteine + [acceptor protein]-L-lysine = [E2 ubiquitin-conjugating enzyme]-L-cysteine + N(6)-ubiquitinyl-[acceptor protein]-L-lysine.. It participates in protein modification; protein ubiquitination. Its function is as follows. E2-dependent E3 ubiquitin-protein ligase that functions as a RIGI coreceptor in the sensing of viral RNAs in cell cytoplasm and the activation of the antiviral innate immune response. Together with the UBE2D3, UBE2N and UB2V1 E2 ligases, catalyzes the 'Lys-63'-linked polyubiquitination of RIGI oligomerized on viral RNAs, an essential step in the activation of the RIG-I signaling pathway. Through a ubiquitin-independent parallel mechanism, which consists in bridging RIGI filaments forming on longer viral RNAs, further activates the RIG-I signaling pathway. This second mechanism that synergizes with the ubiquitin-dependent one would thereby allow an RNA length-dependent regulation of the RIG-I signaling pathway. Associated with the E2 ligase UBE2N, also constitutively synthesizes unanchored 'Lys-63'-linked polyubiquitin chains that may also activate the RIG-I signaling pathway. In Rattus norvegicus (Rat), this protein is E3 ubiquitin-protein ligase RNF135.